The following is a 197-amino-acid chain: RNA-binding protein Rsf1 (197 aa).

One can recognise an RRM domain in the interval 7–80; the sequence is TRVYVGNLTD…SQLRVEISKG (74 aa). Residues 74-197 form a disordered region; that stretch reads RVEISKGRPR…SRSPVGNHRF (124 aa). The span at 89–102 shows a compositional bias: basic and acidic residues; it reads GPMDRGGRRGDFGR. Position 106 is a phosphothreonine (Thr106). Composition is skewed to low complexity over residues 117-144 and 166-176; these read QRGS…SYNG and RYSSGSSASYG. Residues Ser168, Ser171, Ser174, Ser188, and Ser190 each carry the phosphoserine modification.

It belongs to the splicing factor SR family. Post-translationally, extensively phosphorylated on serine residues in the RS domain.

The protein resides in the nucleus. In terms of biological role, may control important aspects of development. The polypeptide is RNA-binding protein Rsf1 (Rsf1) (Drosophila melanogaster (Fruit fly)).